Here is a 221-residue protein sequence, read N- to C-terminus: tRNA (guanine-N(7)-)-methyltransferase (221 aa).

Positions 51, 76, 103, and 125 each coordinate S-adenosyl-L-methionine. Aspartate 125 is a catalytic residue. Substrate-binding residues include lysine 129 and aspartate 161.

This sequence belongs to the class I-like SAM-binding methyltransferase superfamily. TrmB family.

The catalysed reaction is guanosine(46) in tRNA + S-adenosyl-L-methionine = N(7)-methylguanosine(46) in tRNA + S-adenosyl-L-homocysteine. Its pathway is tRNA modification; N(7)-methylguanine-tRNA biosynthesis. Functionally, catalyzes the formation of N(7)-methylguanine at position 46 (m7G46) in tRNA. The chain is tRNA (guanine-N(7)-)-methyltransferase from Wolbachia pipientis wMel.